The following is a 183-amino-acid chain: ATP-dependent protease subunit HslV (183 aa).

The active site involves threonine 9. Residues alanine 164, cysteine 167, and threonine 170 each contribute to the Na(+) site.

Belongs to the peptidase T1B family. HslV subfamily. As to quaternary structure, a double ring-shaped homohexamer of HslV is capped on each side by a ring-shaped HslU homohexamer. The assembly of the HslU/HslV complex is dependent on binding of ATP.

Its subcellular location is the cytoplasm. It catalyses the reaction ATP-dependent cleavage of peptide bonds with broad specificity.. With respect to regulation, allosterically activated by HslU binding. In terms of biological role, protease subunit of a proteasome-like degradation complex believed to be a general protein degrading machinery. This is ATP-dependent protease subunit HslV from Hydrogenovibrio crunogenus (strain DSM 25203 / XCL-2) (Thiomicrospira crunogena).